We begin with the raw amino-acid sequence, 417 residues long: MAEIKNYTLNFGPQHPAAHGVLRLVLELDGEVIQRADPHIGLLHRATEKLAESKTFIQSVPYMDRLDYVSMMVNEHGYVLAIEKLLGIEVPERAQYIRVLFDEITRVLNHLMWIGAHALDVGAMAVFLYAFREREDLMDVYEAVSGARMHAAYYRPGGVYRDLPEAMPQYKASKIRNERALAKMNEARSGSVLDFIDDFFTRFPKCVDEYETLLTDNRIWKQRLVGIGVVSPERALQLGLTGPMIRGSGIAWDLRKKQPYEVYDRIDFDIPVGVNGDCYDRYLVRVEEMRQSTRIAKQCIEWLRENPGPVITDNHKVAPPSRVGMKTNMEDLIHHFKLFTEGFHVPEGEAYAAVEHPKGEFGIYLVSDGANKPYRLKIRAPGYAHLSALDEMARGHMIADAVTIIGTQDIVFGEIDR.

Belongs to the complex I 49 kDa subunit family. As to quaternary structure, NDH-1 is composed of 14 different subunits. Subunits NuoB, C, D, E, F, and G constitute the peripheral sector of the complex.

The protein localises to the cell inner membrane. The enzyme catalyses a quinone + NADH + 5 H(+)(in) = a quinol + NAD(+) + 4 H(+)(out). Its function is as follows. NDH-1 shuttles electrons from NADH, via FMN and iron-sulfur (Fe-S) centers, to quinones in the respiratory chain. The immediate electron acceptor for the enzyme in this species is believed to be ubiquinone. Couples the redox reaction to proton translocation (for every two electrons transferred, four hydrogen ions are translocated across the cytoplasmic membrane), and thus conserves the redox energy in a proton gradient. This Burkholderia thailandensis (strain ATCC 700388 / DSM 13276 / CCUG 48851 / CIP 106301 / E264) protein is NADH-quinone oxidoreductase subunit D.